A 276-amino-acid chain; its full sequence is Exosome complex component RRP43 (276 aa).

Ala-2 bears the N-acetylalanine mark.

The protein belongs to the RNase PH family. As to quaternary structure, component of the RNA exosome core complex (Exo-9), composed of EXOSC1, EXOSC2, EXOSC3, EXOSC4, EXOSC5, EXOSC6, EXOSC7, EXOSC8 and EXOSC9; within the complex interacts with EXOSC5 and EXOSC6. The catalytically inactive RNA exosome core complex (Exo-9) associates with the catalytic subunit EXOSC10/RRP6. Exo-9 may associate with DIS3 to form the nucleolar exosome complex, or DIS3L to form the cytoplasmic exosome complex. Exo-9 is formed by a hexameric base ring consisting of the heterodimers EXOSC4-EXOSC9, EXOSC5-EXOSC8 and EXOSC6-EXOSC7, and a cap ring consisting of EXOSC1, EXOSC2 and EXOSC3. The RNA exosome complex associates with cofactors C1D/RRP47, MPHOSPH6/MPP6 and MTREX/MTR4.

It localises to the cytoplasm. The protein resides in the nucleus. The protein localises to the nucleolus. In terms of biological role, non-catalytic component of the RNA exosome complex which has 3'-&gt;5' exoribonuclease activity and participates in a multitude of cellular RNA processing and degradation events. In the nucleus, the RNA exosome complex is involved in proper maturation of stable RNA species such as rRNA, snRNA and snoRNA, in the elimination of RNA processing by-products and non-coding 'pervasive' transcripts, such as antisense RNA species and promoter-upstream transcripts (PROMPTs), and of mRNAs with processing defects, thereby limiting or excluding their export to the cytoplasm. The RNA exosome may be involved in Ig class switch recombination (CSR) and/or Ig variable region somatic hypermutation (SHM) by targeting AICDA deamination activity to transcribed dsDNA substrates. In the cytoplasm, the RNA exosome complex is involved in general mRNA turnover and specifically degrades inherently unstable mRNAs containing AU-rich elements (AREs) within their 3' untranslated regions, and in RNA surveillance pathways, preventing translation of aberrant mRNAs. It seems to be involved in degradation of histone mRNA. The catalytic inactive RNA exosome core complex of 9 subunits (Exo-9) is proposed to play a pivotal role in the binding and presentation of RNA for ribonucleolysis, and to serve as a scaffold for the association with catalytic subunits and accessory proteins or complexes. EXOSC8 binds to ARE-containing RNAs. This Mus musculus (Mouse) protein is Exosome complex component RRP43 (Exosc8).